Here is a 288-residue protein sequence, read N- to C-terminus: Fatty acid-binding protein TM_1468 (288 aa).

The DegV domain maps to 3–283 (VKILVDSTAD…PGTVGFGIEV (281 aa)). Hexadecanoate is bound by residues threonine 63 and serine 96.

As to quaternary structure, monomer.

Functionally, binds long-chain fatty acids, such as palmitate, and may play a role in lipid transport or fatty acid metabolism. The chain is Fatty acid-binding protein TM_1468 from Thermotoga maritima (strain ATCC 43589 / DSM 3109 / JCM 10099 / NBRC 100826 / MSB8).